A 643-amino-acid polypeptide reads, in one-letter code: E3 ubiquitin-protein ligase AMFR (643 aa).

6 helical membrane passes run 82 to 102 (LFVW…AKLI), 122 to 142 (FWNF…VQTV), 186 to 206 (VLSL…VCCV), 215 to 235 (TLAF…HVIL), 254 to 274 (GTYV…LDLM), and 276 to 296 (HIHM…VIFM). Residues 341–379 (CAICWDSMQAARKLPCGHLFHNSCLRSWLEQDTSCPTCR) form an RING-type zinc finger. Residues 429 to 449 (IASWLPSFSVEVMHTTNILGI) form a helical membrane-spanning segment. Residues 456–498 (QLNAMAHQIQEMFPQVPYHLVLQDLQMTRSVEITTDNILEGRI) form the CUE domain. The disordered stretch occupies residues 504–535 (TQRSDSLRPALNSPVERPSPDLEEGEASVQTE). Ser-516 and Ser-542 each carry phosphoserine. A disordered region spans residues 598 to 624 (LNKSSEDDGASERLLPSEGTSSDPVTL). Positions 622 to 640 (VTLRRRMLAAAAERRLQRQ) are VCP/p97-interacting motif (VIM).

Interacts with RNF5. Also forms an ERAD complex containing VCP/p97, NGLY1; PSMC1; SAKS1 and RAD23B required for coupling retrotranslocation, ubiquitination and deglycosylation. Interacts with DERL1. Interacts (through a region distinct from the RING finger) with UBE2G2/UBC7. Component of the VCP/p97-AMFR/gp78 complex that enhances VCP/p97 binding to polyubiquitinated proteins for their degradation by the endoplasmic reticulum-associated degradation (ERAD) pathway. Interacts (via the VIM) with VCP/p97. Interacts (via its membrane domain) with INSIG1; the interaction initiates the sterol-mediated ubiquitination and degradation of HMGCR by the ERAD pathway. Interacts with AUP1, UBE2G2 and RNF139/TRC8; interaction with AUP1 facilitates interaction of AMFR with ubiquitin-conjugating enzyme UBE2G2 and ubiquitin ligase RNF139, leading to sterol-induced ubiquitination of HNGCR and its subsequent proteasomal degradation. Interacts with BAG6. Interacts with USP13 (via UBA 2 domain); the interaction is direct. Interacts with LMBR1L, UBAC2 and CTNNB1. Interacts with C18orf32. In terms of processing, palmitoylation of the RING-type zing finger by ZDHHC6 promotes localization to the peripheral endoplasmic reticulum. As to expression, expressed in heart, brain, liver, lung, skeletal muscle, kidney and testis. Not detected in spleen.

The protein resides in the endoplasmic reticulum membrane. The catalysed reaction is [E2 ubiquitin-conjugating enzyme]-S-ubiquitinyl-L-cysteine + [acceptor protein]-L-cysteine = [E2 ubiquitin-conjugating enzyme]-L-cysteine + [acceptor protein]-S-ubiquitinyl-L-cysteine.. The protein operates within protein modification; protein ubiquitination. E3 ubiquitin-protein ligase that mediates the polyubiquitination of lysine and cysteine residues on target proteins, such as CD3D, CYP3A4, CFTR, INSIG1, SOAT2/ACAT2 and APOB for proteasomal degradation. Component of a VCP/p97-AMFR/gp78 complex that participates in the final step of endoplasmic reticulum-associated degradation (ERAD). The VCP/p97-AMFR/gp78 complex is involved in the sterol-accelerated ERAD degradation of HMGCR through binding to the HMGCR-INSIG1 complex at the ER membrane. In addition, interaction of AMFR with AUP1 facilitates interaction of AMFR with ubiquitin-conjugating enzyme UBE2G2 and ubiquitin ligase RNF139, leading to sterol-induced HMGCR ubiquitination. The ubiquitinated HMGCR is then released from the ER by the complex into the cytosol for subsequent destruction. In addition to ubiquitination on lysine residues, catalyzes ubiquitination on cysteine residues: together with INSIG1, mediates polyubiquitination of SOAT2/ACAT2 at 'Cys-277', leading to its degradation when the lipid levels are low. Catalyzes ubiquitination and subsequent degradation of INSIG1 when cells are depleted of sterols. Mediates polyubiquitination of INSIG2 at 'Cys-215' in some tissues, leading to its degradation. Also regulates ERAD through the ubiquitination of UBL4A a component of the BAG6/BAT3 complex. Also acts as a scaffold protein to assemble a complex that couples ubiquitination, retranslocation and deglycosylation. Mediates tumor invasion and metastasis as a receptor for the GPI/autocrine motility factor. In association with LMBR1L and UBAC2, negatively regulates the canonical Wnt signaling pathway in the lymphocytes by promoting the ubiquitin-mediated degradation of CTNNB1 and Wnt receptors FZD6 and LRP6. Regulates NF-kappa-B and MAPK signaling pathways by mediating 'Lys-27'-linked polyubiquitination of TAB3 and promoting subsequent TAK1/MAP3K7 activation. This Mus musculus (Mouse) protein is E3 ubiquitin-protein ligase AMFR (Amfr).